Here is a 187-residue protein sequence, read N- to C-terminus: GMP synthase [glutamine-hydrolyzing] subunit A (187 aa).

In terms of domain architecture, Glutamine amidotransferase type-1 spans 1-187 (MILIIDNHGQ…KNFAKLCGEL (187 aa)). Catalysis depends on C76, which acts as the Nucleophile. Active-site residues include H164 and E166.

Heterodimer composed of a glutamine amidotransferase subunit (A) and a GMP-binding subunit (B).

It catalyses the reaction XMP + L-glutamine + ATP + H2O = GMP + L-glutamate + AMP + diphosphate + 2 H(+). It participates in purine metabolism; GMP biosynthesis; GMP from XMP (L-Gln route): step 1/1. Functionally, catalyzes the synthesis of GMP from XMP. This Methanopyrus kandleri (strain AV19 / DSM 6324 / JCM 9639 / NBRC 100938) protein is GMP synthase [glutamine-hydrolyzing] subunit A.